The sequence spans 377 residues: DNA replication and repair protein RecF (377 aa).

30–37 (GPNGVGKT) is a binding site for ATP.

This sequence belongs to the RecF family.

The protein resides in the cytoplasm. Functionally, the RecF protein is involved in DNA metabolism; it is required for DNA replication and normal SOS inducibility. RecF binds preferentially to single-stranded, linear DNA. It also seems to bind ATP. The polypeptide is DNA replication and repair protein RecF (Salinispora tropica (strain ATCC BAA-916 / DSM 44818 / JCM 13857 / NBRC 105044 / CNB-440)).